The sequence spans 75 residues: Supwaprin-a (75 aa).

A signal peptide spans 1–24 (MSSGGLLLLLGFLTLWAELTPVSG). The region spanning 27 to 72 (RPKKPGLCPPRPQKPPCVRECKNDWSCPGEQKCCRYGCIFECRDPI) is the WAP domain. Disulfide bonds link Cys34–Cys60, Cys43–Cys64, Cys47–Cys59, and Cys53–Cys68.

The protein belongs to the venom waprin family. Expressed by the venom gland.

The protein resides in the secreted. Functionally, damages membranes of susceptible bacteria. Has no hemolytic activity. Not toxic to mice. Does not inhibit the proteinases elastase and cathepsin G. This Austrelaps superbus (Lowland copperhead snake) protein is Supwaprin-a.